The primary structure comprises 100 residues: Acylphosphatase (100 aa).

The region spanning 14 to 100 (RLSAWVHGHV…RGDLTGFEER (87 aa)) is the Acylphosphatase-like domain. Residues Arg29 and Asn47 contribute to the active site.

Belongs to the acylphosphatase family.

It carries out the reaction an acyl phosphate + H2O = a carboxylate + phosphate + H(+). The polypeptide is Acylphosphatase (acyP) (Nocardia farcinica (strain IFM 10152)).